The primary structure comprises 371 residues: Antibiotic efflux pump periplasmic linker protein ArpA (371 aa).

The first 22 residues, 1-22 (MQFKPAVTALVSAVALATLLSG), serve as a signal peptide directing secretion. C23 carries the N-palmitoyl cysteine lipid modification. The S-diacylglycerol cysteine moiety is linked to residue C23. The stretch at 115–155 (LAERYKQLIDEQAVSKQEYDDANAKRLQAEASLKSAQIDLR) forms a coiled coil.

The protein belongs to the membrane fusion protein (MFP) (TC 8.A.1) family.

The protein resides in the cell inner membrane. Its function is as follows. The periplasmic linker protein component of an antibiotic efflux pump. Confers resistance to numerous structurally unrelated antibiotics such as carbenicillin, chloramphenicol, erythromycin, novobiocin, streptomycin and tetracycline. Is not involved in organic solvent efflux. The protein is Antibiotic efflux pump periplasmic linker protein ArpA (arpA) of Pseudomonas putida (Arthrobacter siderocapsulatus).